The primary structure comprises 131 residues: Insulin-like 3 (131 aa).

Positions 1-26 (MDPHPLTWALVLLGPALALSRAPAPA) are cleaved as a signal peptide. Disulfide bonds link cysteine 34–cysteine 116, cysteine 46–cysteine 129, and cysteine 115–cysteine 120. Residues 58-103 (AVAGGDRELLQWLEGQHLFHGLMASGDPMLVLAPQPPPQASGHHHH) constitute a propeptide, c peptide like.

It belongs to the insulin family. Heterodimer of a B chain and an A chain linked by two disulfide bonds. As to expression, expressed exclusively in prenatal and postnatal Leydig cells.

It is found in the secreted. Functionally, seems to play a role in testicular function. May be a trophic hormone with a role in testicular descent in fetal life. Is a ligand for LGR8 receptor. The chain is Insulin-like 3 (INSL3) from Sus scrofa (Pig).